The following is a 209-amino-acid chain: uncharacterized protein (209 aa).

3 helical membrane-spanning segments follow: residues 10-32 (AVVI…YLAF), 37-59 (LRYV…TGLI), and 64-86 (FIYF…ILYV).

Its subcellular location is the cell membrane. This is an uncharacterized protein from Aquifex aeolicus (strain VF5).